The sequence spans 344 residues: Neurotrimin (344 aa).

The N-terminal stretch at 1–33 (MGVCGYLFLPWKCLVVVSLRLLFLVPTGVPVRS) is a signal peptide. 3 Ig-like C2-type domains span residues 39–126 (PKAM…PKTS), 136–218 (PKIV…VKVT), and 222–309 (PPYI…ASIM). N-linked (GlcNAc...) asparagine glycosylation is found at Asn44, Asn70, and Asn152. A disulfide bridge connects residues Cys57 and Cys115. 2 disulfides stabilise this stretch: Cys157-Cys201 and Cys243-Cys295. Asn284, Asn292, and Asn305 each carry an N-linked (GlcNAc...) asparagine glycan. Residue Asn321 is the site of GPI-anchor amidated asparagine; alternate attachment. An N-linked (GlcNAc...) asparagine; alternate glycan is attached at Asn321. The propeptide at 322 to 344 (GTSRRAGCIWLLPLLVLHLLLKF) is removed in mature form.

The protein belongs to the immunoglobulin superfamily. IgLON family.

The protein resides in the cell membrane. Functionally, neural cell adhesion molecule. The protein is Neurotrimin (Ntm) of Mus musculus (Mouse).